The chain runs to 929 residues: DNA mismatch repair protein MutS (929 aa).

Residues 22 to 46 (PAAPRSTGSAAAPPPSPAVLDDRSG) are disordered. Residues 23–32 (AAPRSTGSAA) show a composition bias toward low complexity. 678–685 (GPNMAGKS) is an ATP binding site.

This sequence belongs to the DNA mismatch repair MutS family.

In terms of biological role, this protein is involved in the repair of mismatches in DNA. It is possible that it carries out the mismatch recognition step. This protein has a weak ATPase activity. This Rhodospirillum rubrum (strain ATCC 11170 / ATH 1.1.1 / DSM 467 / LMG 4362 / NCIMB 8255 / S1) protein is DNA mismatch repair protein MutS.